The chain runs to 206 residues: Phosphatidyl-N-methylethanolamine N-methyltransferase (206 aa).

The Lumenal portion of the chain corresponds to 1-20; that stretch reads MKESVQEIIQQLIHSVDLQS. The helical intramembrane region spans 21 to 41; the sequence is SKFQLAIVCTMFNPIFWNIVA. At 42–53 the chain is on the lumenal side; sequence RMEYHKHSLTKM. A helical membrane pass occupies residues 54 to 74; that stretch reads CGGARKGCYMLAATIFSLGIV. Over 75 to 101 the chain is Cytoplasmic; sequence RDMVYESALREQPTCSLITGENWTKLG. Residues 102-122 traverse the membrane as a helical segment; the sequence is VALFGLGQVLVLSSMYKLGIT. 106-108 provides a ligand contact to S-adenosyl-L-methionine; that stretch reads GLG. The Lumenal segment spans residues 123-165; that stretch reads GTYLGDYFGILMDERVTGFPFNVSNNPMYQGSTLSFLGIALYK. The helical transmembrane segment at 166–186 threads the bilayer; sequence GKPAGLVVSAVVYFMYKIALR. Topologically, residues 187–206 are cytoplasmic; it reads WEEPFTAMIYANRDKAKKNM. Residue 188-189 coordinates S-adenosyl-L-methionine; it reads EE.

The protein belongs to the class VI-like SAM-binding methyltransferase superfamily. PEMT/PEM2 methyltransferase family.

Its subcellular location is the endoplasmic reticulum membrane. It is found in the mitochondrion membrane. The catalysed reaction is a 1,2-diacyl-sn-glycero-3-phosphoethanolamine + S-adenosyl-L-methionine = a 1,2-diacyl-sn-glycero-3-phospho-N-methylethanolamine + S-adenosyl-L-homocysteine + H(+). It catalyses the reaction a 1,2-diacyl-sn-glycero-3-phospho-N-methylethanolamine + S-adenosyl-L-methionine = a 1,2-diacyl-sn-glycero-3-phospho-N,N-dimethylethanolamine + S-adenosyl-L-homocysteine + H(+). The enzyme catalyses a 1,2-diacyl-sn-glycero-3-phospho-N,N-dimethylethanolamine + S-adenosyl-L-methionine = a 1,2-diacyl-sn-glycero-3-phosphocholine + S-adenosyl-L-homocysteine + H(+). It functions in the pathway phospholipid metabolism; phosphatidylcholine biosynthesis. Catalyzes the second two steps of the methylation pathway of phosphatidylcholine biosynthesis, the SAM-dependent methylation of phosphatidylmonomethylethanolamine (PMME) to phosphatidyldimethylethanolamine (PDME) and of PDME to phosphatidylcholine (PC). Can also catalyze the first methylation reaction of PE to PMME in the absence of PE methyltransferase CHO2. The chain is Phosphatidyl-N-methylethanolamine N-methyltransferase from Saccharomyces cerevisiae (strain ATCC 204508 / S288c) (Baker's yeast).